The following is a 200-amino-acid chain: Charged multivesicular body protein 6-A (200 aa).

The N-myristoyl glycine moiety is linked to residue Gly2. The stretch at 9–102 (RRSRVTEQDK…FAQIEMKVIE (94 aa)) forms a coiled coil. The segment at 166 to 200 (EDLELPEAPSEPLPDTIPEKQAVKNKPKPQMIAAS) is disordered. The Type-2 MIT-interacting motif signature appears at 168–179 (LELPEAPSEPLP).

Belongs to the SNF7 family. Probable core component of the endosomal sorting required for transport complex III (ESCRT-III). ESCRT-III components are thought to multimerize to form a flat lattice on the perimeter membrane of the endosome.

The protein localises to the endomembrane system. It is found in the late endosome membrane. Its function is as follows. Probable core component of the endosomal sorting required for transport complex III (ESCRT-III) which is involved in multivesicular bodies (MVBs) formation and sorting of endosomal cargo proteins into MVBs. MVBs contain intraluminal vesicles (ILVs) that are generated by invagination and scission from the limiting membrane of the endosome and mostly are delivered to lysosomes enabling degradation of membrane proteins, such as stimulated growth factor receptors, lysosomal enzymes and lipids. In the ESCRT-III complex, it probably serves as an acceptor for the ESCRT-II complex on endosomal membranes. The sequence is that of Charged multivesicular body protein 6-A (chmp6-a) from Xenopus laevis (African clawed frog).